The sequence spans 368 residues: Histidinol-phosphate aminotransferase 1 (368 aa).

Position 224 is an N6-(pyridoxal phosphate)lysine (Lys-224).

The protein belongs to the class-II pyridoxal-phosphate-dependent aminotransferase family. Histidinol-phosphate aminotransferase subfamily. In terms of assembly, homodimer. Requires pyridoxal 5'-phosphate as cofactor.

The catalysed reaction is L-histidinol phosphate + 2-oxoglutarate = 3-(imidazol-4-yl)-2-oxopropyl phosphate + L-glutamate. It participates in amino-acid biosynthesis; L-histidine biosynthesis; L-histidine from 5-phospho-alpha-D-ribose 1-diphosphate: step 7/9. This chain is Histidinol-phosphate aminotransferase 1 (hisC1), found in Rhizobium meliloti (strain 1021) (Ensifer meliloti).